We begin with the raw amino-acid sequence, 471 residues long: COP9 signalosome complex subunit 1 (471 aa).

In terms of domain architecture, PCI spans 249-411; the sequence is CFLLASFDHC…KILYARDVDQ (163 aa). Residues 445 to 471 form a disordered region; it reads HVKSPPREGSQGELTPANSQSRMSTNM. Residues Ser448 and Ser454 each carry the phosphoserine modification. A compositionally biased stretch (polar residues) spans 456-471; the sequence is GELTPANSQSRMSTNM. Thr459 carries the post-translational modification Phosphothreonine. Position 463 is a phosphoserine (Ser463).

It belongs to the CSN1 family. In terms of assembly, component of the CSN complex, composed of COPS1/GPS1, COPS2, COPS3, COPS4, COPS5, COPS6, COPS7 (COPS7A or COPS7B), COPS8 and COPS9. In the complex, it probably interacts directly with COPS2, COPS3, COPS4 and COPS5. Interacts directly with inositol kinase ITPK1. Interacts with CAPN8. Interacts with USP48. Interacts with ASB4; this interaction negatively regulates GPS1. As to expression, expressed in the base region of the oxyntic and pyloric mucosae.

The protein resides in the cytoplasm. The protein localises to the nucleus. In terms of biological role, essential component of the COP9 signalosome complex (CSN), a complex involved in various cellular and developmental processes. The CSN complex is an essential regulator of the ubiquitin (Ubl) conjugation pathway by mediating the deneddylation of the cullin subunits of SCF-type E3 ligase complexes, leading to decrease the Ubl ligase activity of SCF-type complexes such as SCF, CSA or DDB2. The complex is also involved in phosphorylation of p53/TP53, c-jun/JUN, IkappaBalpha/NFKBIA, ITPK1 and IRF8/ICSBP, possibly via its association with CK2 and PKD kinases. CSN-dependent phosphorylation of TP53 and JUN promotes and protects degradation by the Ubl system, respectively. Suppresses G-protein- and mitogen-activated protein kinase-mediated signal transduction. This Mus musculus (Mouse) protein is COP9 signalosome complex subunit 1 (Gps1).